The following is a 121-amino-acid chain: Small ribosomal subunit protein uS13 (121 aa).

A disordered region spans residues 94–121; sequence SLPVRGQNTKNNSRTRKGPRRTVANKKK. Positions 106–121 are enriched in basic residues; the sequence is SRTRKGPRRTVANKKK.

This sequence belongs to the universal ribosomal protein uS13 family. In terms of assembly, part of the 30S ribosomal subunit. Forms a loose heterodimer with protein S19. Forms two bridges to the 50S subunit in the 70S ribosome.

Located at the top of the head of the 30S subunit, it contacts several helices of the 16S rRNA. In the 70S ribosome it contacts the 23S rRNA (bridge B1a) and protein L5 of the 50S subunit (bridge B1b), connecting the 2 subunits; these bridges are implicated in subunit movement. Contacts the tRNAs in the A and P-sites. The chain is Small ribosomal subunit protein uS13 from Exiguobacterium sp. (strain ATCC BAA-1283 / AT1b).